The chain runs to 429 residues: Stromal membrane-associated protein 2 (429 aa).

Residues 13-137 (QAVLANLLLE…LDINAFRKEK (125 aa)) form the Arf-GAP domain. The C4-type zinc-finger motif lies at 28-51 (CADCQSKGPRWASWNIGVFICIRC). The residue at position 127 (Ser127) is a Phosphoserine. Basic and acidic residues predominate over residues 138–172 (DNKWKRGSEPAPEKKMEPVVFEKVKMPQKKEDPQL). Disordered regions lie at residues 138–181 (DNKW…PKSK) and 217–263 (VSSP…KKQL). Residues 163 to 232 (MPQKKEDPQL…SVSRKVVGSM (70 aa)) form an interaction with clathrin heavy chains region. The span at 217–231 (VSSPSSSVSRKVVGS) shows a compositional bias: low complexity. A phosphoserine mark is found at Ser219, Ser223, Ser225, Ser231, and Ser240. Basic and acidic residues predominate over residues 253 to 263 (SKSEETSKKQL). Residues 340–429 (MGGMQASMMG…NQTLSPQMWK (90 aa)) are interaction with PICALM.

As to quaternary structure, interacts with ARF1. Interacts with PICALM and clathrin heavy chains.

The protein resides in the cytoplasm. GTPase activating protein that acts on ARF1. Can also activate ARF6 (in vitro). May play a role in clathrin-dependent retrograde transport from early endosomes to the trans-Golgi network. This Bos taurus (Bovine) protein is Stromal membrane-associated protein 2 (SMAP2).